A 67-amino-acid polypeptide reads, in one-letter code: Inosine/xanthosine triphosphatase (67 aa).

The protein belongs to the YjjX NTPase family. Homodimer. Requires Mg(2+) as cofactor. Mn(2+) is required as a cofactor.

The catalysed reaction is XTP + H2O = XDP + phosphate + H(+). It carries out the reaction ITP + H2O = IDP + phosphate + H(+). In terms of biological role, phosphatase that hydrolyzes non-canonical purine nucleotides such as XTP and ITP to their respective diphosphate derivatives. Probably excludes non-canonical purines from DNA/RNA precursor pool, thus preventing their incorporation into DNA/RNA and avoiding chromosomal lesions. This chain is Inosine/xanthosine triphosphatase, found in Enterobacter cloacae.